Here is a 267-residue protein sequence, read N- to C-terminus: Ubiquinone biosynthesis protein COQ4, mitochondrial (267 aa).

A mitochondrion-targeting transit peptide spans 1–17; it reads MSRLKIPSQLLRGGRGF. Zn(2+) contacts are provided by His-153, Asp-154, His-157, and Glu-169.

This sequence belongs to the COQ4 family. In terms of assembly, component of a multi-subunit COQ enzyme complex, composed of at least COQ3, COQ4, COQ5, COQ6, COQ7 and COQ9. Zn(2+) is required as a cofactor.

The protein localises to the mitochondrion inner membrane. It carries out the reaction a 4-hydroxy-3-methoxy-5-(all-trans-polyprenyl)benzoate + H(+) = a 2-methoxy-6-(all-trans-polyprenyl)phenol + CO2. It functions in the pathway cofactor biosynthesis; ubiquinone biosynthesis. Its function is as follows. Lyase that catalyzes the C1-decarboxylation of 4-hydroxy-3-methoxy-5-(all-trans-polyprenyl)benzoic acid into 2-methoxy-6-(all-trans-polyprenyl)phenol during ubiquinone biosynthesis. This chain is Ubiquinone biosynthesis protein COQ4, mitochondrial, found in Arthroderma otae (strain ATCC MYA-4605 / CBS 113480) (Microsporum canis).